Here is a 1037-residue protein sequence, read N- to C-terminus: Glycine dehydrogenase (decarboxylating) 1, mitochondrial (1037 aa).

The transit peptide at 1 to 67 (MERARRLAYR…AFGRHQQTRS (67 aa)) directs the protein to the mitochondrion. Cysteine 98 carries the S-glutathionyl cysteine; transient modification. An S-glutathionyl cysteine mark is found at cysteine 402 and cysteine 463. Residue lysine 774 is modified to N6-(pyridoxal phosphate)lysine. An S-glutathionyl cysteine; transient mark is found at cysteine 777, cysteine 943, and cysteine 1022.

Belongs to the GcvP family. In terms of assembly, homodimer. The glycine cleavage system is composed of four proteins: P, T, L and H. Pyridoxal 5'-phosphate is required as a cofactor. Post-translationally, glutathionylated at Cys-98, Cys-777, Cys-943 and Cys-1022 after S-nitrosoglutathione treatment. S-nitrosylated at unknown positions by nitric oxide. In terms of tissue distribution, expressed in leaves. Detected in roots, stems, flowers and siliques.

The protein localises to the mitochondrion. The enzyme catalyses N(6)-[(R)-lipoyl]-L-lysyl-[glycine-cleavage complex H protein] + glycine + H(+) = N(6)-[(R)-S(8)-aminomethyldihydrolipoyl]-L-lysyl-[glycine-cleavage complex H protein] + CO2. With respect to regulation, inhibited by harpin, S-nitrosoglutathione (GSNO), nitric oxide, N-ethylmaleimide and 5,5'-dithiobis-(2-nitrobenzoic acid). In terms of biological role, the glycine decarboxylase (GDC) or glycine cleavage system catalyzes the degradation of glycine. The P protein binds the alpha-amino group of glycine through its pyridoxal phosphate cofactor; CO(2) is released and the remaining methylamine moiety is then transferred to the lipoamide cofactor of the H protein. The protein is Glycine dehydrogenase (decarboxylating) 1, mitochondrial (GLDP1) of Arabidopsis thaliana (Mouse-ear cress).